A 392-amino-acid polypeptide reads, in one-letter code: MMEDDGQPRTLYVGNLSRDVTEVLILQLFSQIGPCKSCKMITEQPDSRRVNSSVGFSVLQHTSNDPYCFVEFYEHRDAAAALAAMNGRKILGKEVKVNWATTPSSQKKDTSNHFHVFVGDLSPEITTEDIKSAFAPFGKISDARVVKDMATGKSKGYGFVSFYNKLDAENAIVHMGGQWLGGRQIRTNWATRKPPAPKSTQETNTKQLRFEDVVNQSSPKNCTVYCGGIASGLTDQLMRQTFSPFGQIMEIRVFPEKGYSFVRFSTHESAAHAIVSVNGTTIEGHVVKCYWGKESPDMTKNFQQVDYSQWGQWSQVYGNPQQYGQYMANGWQVPPYGVYGQPWNQQGFGVDQSPSAAWMGGFGAQPPQGQAPPPVIPPPNQAGYGMASFPTQ.

2 consecutive RRM domains span residues 9-102 and 114-192; these read RTLY…WATT and FHVF…WATR. Lys-139 carries the N6-acetyllysine modification. Ser-218 is subject to Phosphoserine. Residues 222–294 enclose the RRM 3 domain; sequence CTVYCGGIAS…HVVKCYWGKE (73 aa). The disordered stretch occupies residues 363-392; the sequence is GAQPPQGQAPPPVIPPPNQAGYGMASFPTQ. The segment covering 369–380 has biased composition (pro residues); that stretch reads GQAPPPVIPPPN.

As to quaternary structure, interacts with FASTK. Phosphorylated by MAPK14 following DNA damage, releasing TIAR from GADD45A mRNA. In terms of tissue distribution, expressed both in primordial germ cells (PGCs) and in neighboring somatic cells.

The protein localises to the nucleus. It localises to the cytoplasm. It is found in the stress granule. Its subcellular location is the cytolytic granule. In terms of biological role, RNA-binding protein involved in alternative pre-RNA splicing and in cytoplasmic stress granules formation. Shows a preference for uridine-rich RNAs. Activates splicing of alternative exons with weak 5' splice sites followed by a U-rich stretch on its own pre-mRNA and on TIA1 mRNA. Promotes the inclusion of TIA1 exon 5 to give rise to the long isoform (isoform a) of TIA1. Acts downstream of the stress-induced phosphorylation of EIF2S1/EIF2A to promote the recruitment of untranslated mRNAs to cytoplasmic stress granules (SG). Possesses nucleolytic activity against cytotoxic lymphocyte target cells. May be involved in apoptosis. This is Nucleolysin TIAR (Tial1) from Mus musculus (Mouse).